The following is a 380-amino-acid chain: Crotonobetainyl-CoA reductase (380 aa).

The protein belongs to the acyl-CoA dehydrogenase family. In terms of assembly, homotetramer. Requires FAD as cofactor.

It is found in the cytoplasm. The enzyme catalyses 4-(trimethylamino)butanoyl-CoA + oxidized [electron-transfer flavoprotein] + H(+) = crotonobetainyl-CoA + reduced [electron-transfer flavoprotein]. It participates in amine and polyamine metabolism; carnitine metabolism. Catalyzes the reduction of crotonobetainyl-CoA to gamma-butyrobetainyl-CoA. The protein is Crotonobetainyl-CoA reductase of Shigella flexneri serotype 5b (strain 8401).